A 318-amino-acid polypeptide reads, in one-letter code: Oxygen-evolving enhancer protein 1, chloroplastic (318 aa).

The first 18 residues, 1–18 (MKAVIAVFITLMLTAVVA), serve as a signal peptide directing secretion. Residues 45–65 (AAAAALAALTTLSVISPSFAI) form a helical membrane-spanning segment.

The protein belongs to the PsbO family.

Its subcellular location is the plastid. It localises to the chloroplast thylakoid membrane. Stabilizes the manganese cluster which is the primary site of water splitting. In Chattonella marina var. antiqua (Red tide flagellate), this protein is Oxygen-evolving enhancer protein 1, chloroplastic.